Here is a 438-residue protein sequence, read N- to C-terminus: Adenosylhomocysteinase (438 aa).

Substrate contacts are provided by Thr-61, Asp-137, and Glu-162. Residue 163–165 (TTT) coordinates NAD(+). Substrate is bound by residues Lys-192 and Asp-196. Residues Asn-197, 226–231 (GYGDVG), Glu-249, Asn-284, 305–307 (IGH), and Asn-352 each bind NAD(+).

It belongs to the adenosylhomocysteinase family. It depends on NAD(+) as a cofactor.

The protein resides in the cytoplasm. The enzyme catalyses S-adenosyl-L-homocysteine + H2O = L-homocysteine + adenosine. It participates in amino-acid biosynthesis; L-homocysteine biosynthesis; L-homocysteine from S-adenosyl-L-homocysteine: step 1/1. Its function is as follows. May play a key role in the regulation of the intracellular concentration of adenosylhomocysteine. This chain is Adenosylhomocysteinase, found in Flavobacterium johnsoniae (strain ATCC 17061 / DSM 2064 / JCM 8514 / BCRC 14874 / CCUG 350202 / NBRC 14942 / NCIMB 11054 / UW101) (Cytophaga johnsonae).